A 302-amino-acid chain; its full sequence is NAD kinase 1 (302 aa).

Asp67 (proton acceptor) is an active-site residue. Residues 67-68 (DG), Arg72, 148-149 (ND), Lys178, and Asp180 each bind NAD(+).

Belongs to the NAD kinase family. The cofactor is a divalent metal cation.

Its subcellular location is the cytoplasm. The enzyme catalyses NAD(+) + ATP = ADP + NADP(+) + H(+). Its function is as follows. Involved in the regulation of the intracellular balance of NAD and NADP, and is a key enzyme in the biosynthesis of NADP. Catalyzes specifically the phosphorylation on 2'-hydroxyl of the adenosine moiety of NAD to yield NADP. The polypeptide is NAD kinase 1 (Prochlorococcus marinus (strain NATL2A)).